Reading from the N-terminus, the 604-residue chain is Glutamine--fructose-6-phosphate aminotransferase [isomerizing] (604 aa).

Cysteine 2 (nucleophile; for GATase activity) is an active-site residue. The Glutamine amidotransferase type-2 domain maps to 2 to 218 (CGIVGVVGNR…DKELVVLTKD (217 aa)). SIS domains follow at residues 284-423 (IVKS…ANGK) and 456-594 (VANL…VDKP). Catalysis depends on lysine 599, which acts as the For Fru-6P isomerization activity.

In terms of assembly, homodimer.

The protein localises to the cytoplasm. It catalyses the reaction D-fructose 6-phosphate + L-glutamine = D-glucosamine 6-phosphate + L-glutamate. Catalyzes the first step in hexosamine metabolism, converting fructose-6P into glucosamine-6P using glutamine as a nitrogen source. The polypeptide is Glutamine--fructose-6-phosphate aminotransferase [isomerizing] (Streptococcus mutans serotype c (strain ATCC 700610 / UA159)).